The following is a 770-amino-acid chain: DNA ligase 1 (770 aa).

Positions 1 to 18 (MSTGEGTAEQTATGTPAQ) are enriched in low complexity. A disordered region spans residues 1-27 (MSTGEGTAEQTATGTPAQNGRESIPSD). Residues 57 to 61 (DAEFD), 106 to 107 (SL), and glutamate 142 each bind NAD(+). The active-site N6-AMP-lysine intermediate is the lysine 144. NAD(+)-binding residues include arginine 165, glutamate 202, lysine 318, and lysine 342. 4 residues coordinate Zn(2+): cysteine 439, cysteine 442, cysteine 458, and cysteine 464. One can recognise a BRCT domain in the interval 657 to 746 (STPRTLEGLT…PAAVGDAAEA (90 aa)). A disordered region spans residues 741–770 (GDAAEADGGDAPEESAALQEEKAAAVEETA). A compositionally biased stretch (acidic residues) spans 744 to 753 (AEADGGDAPE). Residues 759–770 (QEEKAAAVEETA) show a composition bias toward basic and acidic residues.

This sequence belongs to the NAD-dependent DNA ligase family. LigA subfamily. It depends on Mg(2+) as a cofactor. Mn(2+) is required as a cofactor.

The enzyme catalyses NAD(+) + (deoxyribonucleotide)n-3'-hydroxyl + 5'-phospho-(deoxyribonucleotide)m = (deoxyribonucleotide)n+m + AMP + beta-nicotinamide D-nucleotide.. Functionally, DNA ligase that catalyzes the formation of phosphodiester linkages between 5'-phosphoryl and 3'-hydroxyl groups in double-stranded DNA using NAD as a coenzyme and as the energy source for the reaction. It is essential for DNA replication and repair of damaged DNA. The protein is DNA ligase 1 of Pseudarthrobacter chlorophenolicus (strain ATCC 700700 / DSM 12829 / CIP 107037 / JCM 12360 / KCTC 9906 / NCIMB 13794 / A6) (Arthrobacter chlorophenolicus).